The primary structure comprises 937 residues: Protein SEY1 homolog (937 aa).

The Cytoplasmic segment spans residues 1-848 (MEKGVEKTQI…ETGSKMSLKN (848 aa)). The GB1/RHD3-type G domain occupies 34 to 280 (GFSYNVIAVL…IPSDGFAQYC (247 aa)). 44–51 (GSQSSGKS) serves as a coordination point for GTP. 2 coiled-coil regions span residues 319–339 (NKEI…NFKE) and 725–750 (YLDE…IIIQ). The helical transmembrane segment at 849–869 (VPVVFWIILLLFGWNEILFFI) threads the bilayer. Residues 870–872 (RMF) are Lumenal-facing. A helical transmembrane segment spans residues 873-893 (FKLNVILPLFFAAAFIVSTFV). The Cytoplasmic segment spans residues 894 to 937 (YNGNTQALSYINKIIFYMAKNSYNFFKHIQAISNPPPKNVQKQE).

Belongs to the TRAFAC class dynamin-like GTPase superfamily. GB1/RHD3 GTPase family. RHD3 subfamily.

It is found in the endoplasmic reticulum membrane. In terms of biological role, probable GTP-binding protein involved in generating and maintaining the structure of the tubular endoplasmic reticulum network. The chain is Protein SEY1 homolog from Plasmodium falciparum (isolate 3D7).